Reading from the N-terminus, the 426-residue chain is Histidine--tRNA ligase (426 aa).

This sequence belongs to the class-II aminoacyl-tRNA synthetase family. Homodimer.

It is found in the cytoplasm. It carries out the reaction tRNA(His) + L-histidine + ATP = L-histidyl-tRNA(His) + AMP + diphosphate + H(+). This chain is Histidine--tRNA ligase, found in Streptococcus sanguinis (strain SK36).